A 1304-amino-acid chain; its full sequence is DNA-directed RNA polymerase subunit beta' (1304 aa).

Residues C60, C62, C75, and C78 each contribute to the Zn(2+) site. Positions 541, 543, and 545 each coordinate Mg(2+). C887, C963, C970, and C973 together coordinate Zn(2+).

This sequence belongs to the RNA polymerase beta' chain family. The RNAP catalytic core consists of 2 alpha, 1 beta, 1 beta' and 1 omega subunit. When a sigma factor is associated with the core the holoenzyme is formed, which can initiate transcription. Mg(2+) serves as cofactor. It depends on Zn(2+) as a cofactor.

The enzyme catalyses RNA(n) + a ribonucleoside 5'-triphosphate = RNA(n+1) + diphosphate. Its function is as follows. DNA-dependent RNA polymerase catalyzes the transcription of DNA into RNA using the four ribonucleoside triphosphates as substrates. The protein is DNA-directed RNA polymerase subunit beta' of Acidothermus cellulolyticus (strain ATCC 43068 / DSM 8971 / 11B).